We begin with the raw amino-acid sequence, 456 residues long: tRNA-2-methylthio-N(6)-dimethylallyladenosine synthase (456 aa).

An MTTase N-terminal domain is found at 18-136; it reads EFFFIQTFGC…FPEYLHRVQV (119 aa). 6 residues coordinate [4Fe-4S] cluster: cysteine 27, cysteine 63, cysteine 97, cysteine 173, cysteine 177, and cysteine 180. The 233-residue stretch at 159 to 391 folds into the Radical SAM core domain; sequence RKSNVKAFVT…AVNEGIVVGN (233 aa). One can recognise a TRAM domain in the interval 392–455; it reads KAAEGKIYEV…SFSLVGEVVE (64 aa).

It belongs to the methylthiotransferase family. MiaB subfamily. As to quaternary structure, monomer. It depends on [4Fe-4S] cluster as a cofactor.

It is found in the cytoplasm. It catalyses the reaction N(6)-dimethylallyladenosine(37) in tRNA + (sulfur carrier)-SH + AH2 + 2 S-adenosyl-L-methionine = 2-methylsulfanyl-N(6)-dimethylallyladenosine(37) in tRNA + (sulfur carrier)-H + 5'-deoxyadenosine + L-methionine + A + S-adenosyl-L-homocysteine + 2 H(+). Its function is as follows. Catalyzes the methylthiolation of N6-(dimethylallyl)adenosine (i(6)A), leading to the formation of 2-methylthio-N6-(dimethylallyl)adenosine (ms(2)i(6)A) at position 37 in tRNAs that read codons beginning with uridine. In Clostridium botulinum (strain Alaska E43 / Type E3), this protein is tRNA-2-methylthio-N(6)-dimethylallyladenosine synthase.